The primary structure comprises 84 residues: Exodeoxyribonuclease 7 small subunit (84 aa).

Residues 65-84 (QEGDWTTSPFEPASGEPPGG) are disordered.

Belongs to the XseB family. As to quaternary structure, heterooligomer composed of large and small subunits.

The protein localises to the cytoplasm. It carries out the reaction Exonucleolytic cleavage in either 5'- to 3'- or 3'- to 5'-direction to yield nucleoside 5'-phosphates.. In terms of biological role, bidirectionally degrades single-stranded DNA into large acid-insoluble oligonucleotides, which are then degraded further into small acid-soluble oligonucleotides. This is Exodeoxyribonuclease 7 small subunit from Syntrophobacter fumaroxidans (strain DSM 10017 / MPOB).